Reading from the N-terminus, the 268-residue chain is Undecaprenyl-diphosphatase (268 aa).

8 consecutive transmembrane segments (helical) span residues 4–24 (STTL…FIPV), 50–70 (IQLG…VSVI), 84–104 (VAVL…HGFI), 109–129 (FETP…LLFV), 144–164 (LPLN…VPGV), 185–205 (AEFS…FDLF), 214–234 (SALG…VLVV), and 247–267 (ALFG…LLAG).

This sequence belongs to the UppP family.

The protein resides in the cell inner membrane. The catalysed reaction is di-trans,octa-cis-undecaprenyl diphosphate + H2O = di-trans,octa-cis-undecaprenyl phosphate + phosphate + H(+). Its function is as follows. Catalyzes the dephosphorylation of undecaprenyl diphosphate (UPP). Confers resistance to bacitracin. The protein is Undecaprenyl-diphosphatase of Cereibacter sphaeroides (strain ATCC 17029 / ATH 2.4.9) (Rhodobacter sphaeroides).